Consider the following 937-residue polypeptide: C-1-tetrahydrofolate synthase, cytoplasmic (937 aa).

The interval 1 to 309 (MALLLEGTSL…TLLPLKLQTP (309 aa)) is methylenetetrahydrofolate dehydrogenase and cyclohydrolase. Substrate is bound by residues 50–54 (YVRMK) and 97–99 (VQL). NADP(+) is bound by residues 168–170 (GRS) and Ser-193. 268–272 (PGSVG) is a binding site for substrate. A formyltetrahydrofolate synthetase region spans residues 310–937 (VPSDIEIARS…AENGDIVGLS (628 aa)). 374–381 (TPFGEGKS) provides a ligand contact to ATP.

This sequence in the N-terminal section; belongs to the tetrahydrofolate dehydrogenase/cyclohydrolase family. In the C-terminal section; belongs to the formate--tetrahydrofolate ligase family. Homodimer.

It is found in the cytoplasm. The catalysed reaction is (6R)-5,10-methylene-5,6,7,8-tetrahydrofolate + NADP(+) = (6R)-5,10-methenyltetrahydrofolate + NADPH. It catalyses the reaction (6R)-5,10-methenyltetrahydrofolate + H2O = (6R)-10-formyltetrahydrofolate + H(+). The enzyme catalyses (6S)-5,6,7,8-tetrahydrofolate + formate + ATP = (6R)-10-formyltetrahydrofolate + ADP + phosphate. It functions in the pathway one-carbon metabolism; tetrahydrofolate interconversion. The polypeptide is C-1-tetrahydrofolate synthase, cytoplasmic (Schizosaccharomyces pombe (strain 972 / ATCC 24843) (Fission yeast)).